Consider the following 424-residue polypeptide: Endochitinase 1 (424 aa).

Residues 1-22 (MPSLFAQSLAIIATLQATLGLA) form the signal peptide. In terms of domain architecture, GH18 spans 39-402 (YVNAVYFTNW…GTSSNKLGGP (364 aa)). 3 N-linked (GlcNAc...) asparagine glycosylation sites follow: Asn-74, Asn-78, and Asn-96. Chitin is bound by residues 103–104 (GN) and 130–133 (GGWT). Glu-172 acts as the Proton donor in catalysis. Chitin is bound by residues Tyr-173 and 238–241 (MAYD). Residues Asn-248 and Asn-347 are each glycosylated (N-linked (GlcNAc...) asparagine). Trp-379 contacts chitin. The interval 385–412 (RQGPDSLIGTSSNKLGGPDTTENLLNYP) is disordered. A compositionally biased stretch (polar residues) spans 392-408 (IGTSSNKLGGPDTTENL).

It belongs to the glycosyl hydrolase 18 family. Chitinase class V subfamily.

The protein localises to the secreted. It carries out the reaction Random endo-hydrolysis of N-acetyl-beta-D-glucosaminide (1-&gt;4)-beta-linkages in chitin and chitodextrins.. Its function is as follows. Secreted chitinase involved in the degradation of chitin, a component of the cell walls of fungi and exoskeletal elements of some animals (including worms and arthropods). Participates in the infection process and directly acts in the penetration process of the host cuticle. This chain is Endochitinase 1 (chit1), found in Metarhizium robertsii (strain ARSEF 23 / ATCC MYA-3075) (Metarhizium anisopliae (strain ARSEF 23)).